Here is a 485-residue protein sequence, read N- to C-terminus: UDP-N-acetylmuramate--L-alanine ligase (485 aa).

Residue 120–126 coordinates ATP; it reads GSHGKTT.

The protein belongs to the MurCDEF family.

The protein localises to the cytoplasm. It catalyses the reaction UDP-N-acetyl-alpha-D-muramate + L-alanine + ATP = UDP-N-acetyl-alpha-D-muramoyl-L-alanine + ADP + phosphate + H(+). It participates in cell wall biogenesis; peptidoglycan biosynthesis. Cell wall formation. This is UDP-N-acetylmuramate--L-alanine ligase from Rickettsia conorii (strain ATCC VR-613 / Malish 7).